Reading from the N-terminus, the 107-residue chain is Early E3A 12.5 kDa protein (107 aa).

It belongs to the adenoviridae E3A-2 family.

The sequence is that of Early E3A 12.5 kDa protein from Homo sapiens (Human).